We begin with the raw amino-acid sequence, 400 residues long: Nucleoside permease NupC (400 aa).

Residues M1–R3 lie on the Cytoplasmic side of the membrane. A helical membrane pass occupies residues V4–D24. Over R25–L36 the chain is Periplasmic. Residues L37–V57 form a helical membrane-spanning segment. At K58–G86 the chain is on the cytoplasmic side. A helical transmembrane segment spans residues L87 to I107. Residues L108–T168 are Periplasmic-facing. Residues M169–L189 traverse the membrane as a helical segment. Over E190 to K192 the chain is Cytoplasmic. The chain crosses the membrane as a helical span at residues Y193–N213. The Periplasmic segment spans residues P214–A250. The helical transmembrane segment at I251–F271 threads the bilayer. At A272–S281 the chain is on the cytoplasmic side. A helical transmembrane segment spans residues I282 to P302. The Periplasmic segment spans residues S303–G341. Residues I342 to A362 traverse the membrane as a helical segment. Topologically, residues V363 to G378 are cytoplasmic. A helical transmembrane segment spans residues L379 to V399. Position 400 (L400) is a topological domain, periplasmic.

Belongs to the concentrative nucleoside transporter (CNT) (TC 2.A.41) family.

The protein localises to the cell inner membrane. The enzyme catalyses adenosine(in) + H(+)(in) = adenosine(out) + H(+)(out). It catalyses the reaction uridine(in) + H(+)(in) = uridine(out) + H(+)(out). It carries out the reaction thymidine(in) + H(+)(in) = thymidine(out) + H(+)(out). The catalysed reaction is cytidine(in) + H(+)(in) = cytidine(out) + H(+)(out). The enzyme catalyses 2'-deoxycytidine(in) + H(+)(in) = 2'-deoxycytidine(out) + H(+)(out). With respect to regulation, transport is inhibited by the proton uncoupler dinitrophenol. Inhibited by the nucleoside antibiotic showdomycin. Nucleoside transport protein that can transport adenosine, uridine, thymidine, cytidine and deoxycytidine. Shows weak activity with inosine and xanthosine. Transport is driven by a proton motive force. Does not transport guanosine, deoxyguanosine, hypoxanthine or uracil. Also shows activity with the chemotherapeutic drugs 3'-azido-3'-deoxythymidine (AZT), 2',3'- dideoxycytidine (ddC) and 2'-deoxy-2',2'-difluorocytidine (gemcitabine). This is Nucleoside permease NupC from Escherichia coli (strain K12).